A 425-amino-acid chain; its full sequence is Isocitrate dehydrogenase [NADP] (425 aa).

Threonine 114 provides a ligand contact to NADP(+). 5 residues coordinate D-threo-isocitrate: serine 123, asparagine 125, arginine 129, arginine 139, and arginine 162. Position 316 (aspartate 316) interacts with Mg(2+). NADP(+) is bound by residues 348–354, asparagine 361, tyrosine 400, and arginine 404; that span reads HGTAPKY.

It belongs to the isocitrate and isopropylmalate dehydrogenases family. As to quaternary structure, homodimer. Mg(2+) is required as a cofactor. It depends on Mn(2+) as a cofactor.

The enzyme catalyses D-threo-isocitrate + NADP(+) = 2-oxoglutarate + CO2 + NADPH. Functionally, catalyzes the oxidative decarboxylation of isocitrate to 2-oxoglutarate and carbon dioxide with the concomitant reduction of NADP(+). The chain is Isocitrate dehydrogenase [NADP] (icd) from Helicobacter pylori (strain J99 / ATCC 700824) (Campylobacter pylori J99).